Here is a 344-residue protein sequence, read N- to C-terminus: MKNCERFANLALAGLTLAPLVVRVNPNLNVILTACITVYVGCFRSVKDTPPTETMSKEHAMRFPLVGSAMLLSLFLLFKFLSKDLVNAVLTAYFFVLGIVALSATLLPAIRRFLPNPWNDNLIVWRFPYFKSLEVEFTKSQVVAGIPGTFFCAWYAWKKHWLANNILGLSFCIQGIEMLSLGSFKTGAILLAGLFFYDIFWVFFTPVMVSVAKSFDAPIKLLFPTGDALRPYSMLGLGDIVIPGIFVALALRFDVSRRRQPQYFTSAFIGYAVGVILTIVVMNWFQAAQPALLYIVPAVIGFLASHCIWNGDIKPLLAFDESKTEEATTDESKTSEEVNKAHDE.

Topologically, residues Met1–Ala11 are lumenal. A helical membrane pass occupies residues Leu12 to Leu32. The Cytoplasmic segment spans residues Thr33–Arg62. A helical transmembrane segment spans residues Phe63–Lys83. Over Asp84–Val89 the chain is Lumenal. A helical transmembrane segment spans residues Leu90–Ile110. Residues Arg111–Glu136 lie on the Cytoplasmic side of the membrane. Residues Phe137–Trp157 traverse the membrane as a helical segment. Residues Lys158–His160 are Lumenal-facing. Residues Trp161–Leu181 traverse the membrane as a helical segment. The Cytoplasmic segment spans residues Gly182–Ala188. A helical membrane pass occupies residues Ile189–Val209. Residue Asp198 is part of the active site. Residues Ser210–Arg230 are Lumenal-facing. Residues Pro231–Leu251 form a helical membrane-spanning segment. Asp239 is a catalytic residue. Residues Arg252–Tyr263 lie on the Cytoplasmic side of the membrane. A helical membrane pass occupies residues Phe264 to Trp284. Topologically, residues Phe285–Pro290 are lumenal. Residues Pro290–Leu292 carry the PAL motif. Residues Ala291–Gly311 traverse the membrane as a helical segment. At Asp312 to Glu344 the chain is on the cytoplasmic side. Positions Lys323 to Glu344 are disordered.

It belongs to the peptidase A22B family. Ubiquitous with the highest expression in emerging leaves, roots, and floral tissues (at the protein level). Highly detected in pollen.

The protein localises to the endoplasmic reticulum membrane. Its function is as follows. Intramembrane-cleaving aspartic protease (I-CLiP) that cleaves type II membrane signal peptides in the hydrophobic plane of the membrane. Catalyzes intramembrane proteolysis of some signal peptides after they have been cleaved from a preprotein, resulting in the release of the fragment from the ER membrane into the cytoplasm. Plays a critical role in the development and function of the reproductive tissues, especially in pollen development. This Arabidopsis thaliana (Mouse-ear cress) protein is Signal peptide peptidase (SPP).